Consider the following 954-residue polypeptide: Serine/threonine-protein kinase ste20 (954 aa).

Residues 1–17 show a composition bias toward low complexity; that stretch reads MDGQLSLLSPTSSSSTS. Disordered stretches follow at residues 1–165 and 203–316; these read MDGQ…YDPL and AAPA…RKKS. The span at 18-28 shows a compositional bias: basic residues; the sequence is HSRKRLTKKQR. Composition is skewed to polar residues over residues 33 to 42, 57 to 75, and 100 to 121; these read NHRTSSSFNV, SASS…SLAR, and RSHT…TIPT. 3 stretches are compositionally biased toward low complexity: residues 127–136, 143–153, and 203–214; these read SPASSSQPQT, SAVASTTVTSS, and AAPAPTSTTTIA. The segment covering 224 to 234 has biased composition (pro residues); the sequence is VAPPPPPPPPA. Composition is skewed to low complexity over residues 245 to 256 and 265 to 277; these read ARSSKPSKSPKS and ASSF…FSSA. Positions 334 to 347 constitute a CRIB domain; it reads ISAPENPVHVTHVG. Disordered stretches follow at residues 440–562 and 587–655; these read PMIS…VQAS and QAMA…SNAI. Pro residues-rich tracts occupy residues 463 to 475 and 514 to 527; these read RAPP…PGPL and MPPP…PYLP. A Protein kinase domain is found at 674–925; that stretch reads YRGFTKIGQG…AHDLLRHDFM (252 aa). Residues 680-688 and Lys703 each bind ATP; that span reads IGQGASGGV. Catalysis depends on Asp793, which acts as the Proton acceptor.

This sequence belongs to the protein kinase superfamily. STE Ser/Thr protein kinase family. STE20 subfamily.

It is found in the cytoplasm. The protein resides in the nucleus. It catalyses the reaction L-seryl-[protein] + ATP = O-phospho-L-seryl-[protein] + ADP + H(+). It carries out the reaction L-threonyl-[protein] + ATP = O-phospho-L-threonyl-[protein] + ADP + H(+). In terms of biological role, MAP4K component of the MAPK pathway required for the mating pheromone response and the regulation of cell polarity and cell cycle. Phosphorylates histone H2B to form H2BS10ph. In Neurospora crassa (strain ATCC 24698 / 74-OR23-1A / CBS 708.71 / DSM 1257 / FGSC 987), this protein is Serine/threonine-protein kinase ste20 (stk-4).